The sequence spans 222 residues: Probable nicotinate-nucleotide adenylyltransferase (222 aa).

The protein belongs to the NadD family.

It catalyses the reaction nicotinate beta-D-ribonucleotide + ATP + H(+) = deamido-NAD(+) + diphosphate. It participates in cofactor biosynthesis; NAD(+) biosynthesis; deamido-NAD(+) from nicotinate D-ribonucleotide: step 1/1. Catalyzes the reversible adenylation of nicotinate mononucleotide (NaMN) to nicotinic acid adenine dinucleotide (NaAD). In Xylella fastidiosa (strain M12), this protein is Probable nicotinate-nucleotide adenylyltransferase.